A 715-amino-acid polypeptide reads, in one-letter code: MSMFNKVVKEFQWGQHKVRLETGEVARQASGAVIVDVEDTVVLATVVGAKSAKPGQDFFPLTVDYLEKTYSAGKIPGGFFRREGRPSEHETLTSRLIDRPLRPLFPEGFYNEVQVVIHVLSVNPDIPADIPALIGASAALAVSGLPFNGPVGAARVAYIDNAYVLNPTRDQIKASSLDLVVAGTERAVLMVESEADQLPEDVMLGAVVFGHEQMQIAIDAIHELVREGGKPEWDWQPAPKNEALIARVTELAHGDLLAAYQLRDKQARSTKLKEVYAATSAKLEEDALAAGTVAADKATVGNILFDIEAKIVRSQILNGEPRIDGRDTRTVRPIEIRTGVLPRTHGSALFTRGETQALVVATLGTKGDEQIIDALEGEYRERFMLHYNMPPFATGETGRVGSPKRREIGHGRLAKRALVKCLPSADEFGYSIRVVSEITESNGSSSMASVCGGCLALMDAGVPMKAHVAGIAMGLILEGNKFAVLTDILGDEDHLGDMDFKVAGTEHGVTALQMDIKIQGITKEIMQVALAQAKEGRMHILGKMTSAVSGANTQLSEFAPRMITIKINPEKIRDVIGKGGSVIRALTEETGTTIDISDDGVVTIASTSSEGMAEAKKRIENITAEIEVGQVYEGTVLKLLDFGAIVNLLPGKDGLLHISEIVNERVKDINDYLKEGQQVKVKVIQTDEKGRVRLSAKALLNEAAAASQSDTPPQQ.

Residues aspartate 493 and aspartate 499 each coordinate Mg(2+). Residues 560-619 form the KH domain; the sequence is PRMITIKINPEKIRDVIGKGGSVIRALTEETGTTIDISDDGVVTIASTSSEGMAEAKKRI. The 69-residue stretch at 629–697 folds into the S1 motif domain; the sequence is GQVYEGTVLK…EKGRVRLSAK (69 aa).

This sequence belongs to the polyribonucleotide nucleotidyltransferase family. Requires Mg(2+) as cofactor.

It localises to the cytoplasm. It carries out the reaction RNA(n+1) + phosphate = RNA(n) + a ribonucleoside 5'-diphosphate. In terms of biological role, involved in mRNA degradation. Catalyzes the phosphorolysis of single-stranded polyribonucleotides processively in the 3'- to 5'-direction. The sequence is that of Polyribonucleotide nucleotidyltransferase from Burkholderia vietnamiensis (strain G4 / LMG 22486) (Burkholderia cepacia (strain R1808)).